Reading from the N-terminus, the 507-residue chain is RNA polymerase I-specific transcription initiation factor RRN11 (507 aa).

Residues 37-47 (KSTTTDSLPTP) are compositionally biased toward polar residues. 2 disordered regions span residues 37 to 76 (KSTTTDSLPTPENSAAENNDEEEGQNSEAGTYRRSVLQQK) and 89 to 124 (GEIYSTTESETDSQEEETEEGGEHDTGIDKEDSDEE). Residues 97 to 108 (SETDSQEEETEE) show a composition bias toward acidic residues. Residues 109-124 (GGEHDTGIDKEDSDEE) show a composition bias toward basic and acidic residues.

In terms of assembly, component of the core factor (CF) complex, which consists of RRN6, RRN7 and RRN11. The CF heterotrimer may further dimerize to form a hexamer. RRN11 interacts with RRN6, RRN7 and SPT15.

The protein resides in the nucleus. It is found in the nucleolus. Its function is as follows. Acts as a component of the core factor (CF) complex which is essential for the initiation of rDNA transcription by RNA polymerase I. After binding of UAF (upstream activation factor) to an upstream element of the promoter, CF is recruited in a SPT15/TBP-dependent manner to form a preinitiation complex. The polypeptide is RNA polymerase I-specific transcription initiation factor RRN11 (RRN11) (Saccharomyces cerevisiae (strain ATCC 204508 / S288c) (Baker's yeast)).